The sequence spans 95 residues: YcgL domain-containing protein Patl_2802 (95 aa).

Residues 4–88 (LLCAVYKSSK…PEENLLKQHL (85 aa)) form the YcgL domain.

The chain is YcgL domain-containing protein Patl_2802 from Pseudoalteromonas atlantica (strain T6c / ATCC BAA-1087).